A 328-amino-acid polypeptide reads, in one-letter code: Malate dehydrogenase (328 aa).

NAD(+) is bound at residue 11 to 17 (GAAGQIG). Positions 94 and 100 each coordinate substrate. NAD(+) contacts are provided by residues N107, Q114, and 131 to 133 (VGN). Residues N133 and R164 each contribute to the substrate site. Catalysis depends on H189, which acts as the Proton acceptor.

It belongs to the LDH/MDH superfamily. MDH type 2 family.

The catalysed reaction is (S)-malate + NAD(+) = oxaloacetate + NADH + H(+). Its function is as follows. Catalyzes the reversible oxidation of malate to oxaloacetate. This is Malate dehydrogenase from Xanthomonas axonopodis pv. citri (strain 306).